A 418-amino-acid chain; its full sequence is L-methionine/branched-chain amino acid exporter YjeH (418 aa).

Over 1–15 (MSGLKQELGLAQGIG) the chain is Periplasmic. A helical transmembrane segment spans residues 16 to 36 (LLSTSLLGTGVFAVPALAALV). Topologically, residues 37–41 (AGNNS) are cytoplasmic. A helical membrane pass occupies residues 42 to 62 (LWAWPVLIILVFPIAIVFAIL). The Periplasmic segment spans residues 63 to 89 (GRHYPSAGGVAHFVGMAFGSRLERVTG). A helical transmembrane segment spans residues 90–110 (WLFLSVIPVGLPAALQIAAGF). The Cytoplasmic segment spans residues 111-113 (GQA). A helical membrane pass occupies residues 114–134 (MFGWHSWQLLLAELGTLALVW). Residues 135 to 147 (YIGTRGASSSANL) are Periplasmic-facing. A helical transmembrane segment spans residues 148 to 168 (QTVIAGLIVALIVAIWWAGDI). Residues 169-182 (KPANIPFPAPGNIE) are Cytoplasmic-facing. The helical transmembrane segment at 183–203 (LTGLFAALSVMFWCFVGLEAF) threads the bilayer. Over 204-219 (AHLASEFKNPERDFPR) the chain is Periplasmic. A helical membrane pass occupies residues 220–240 (ALMIGLLLAGLVYWGCTVVVL). Residues 241 to 257 (HFDAYGEKMAAAASLPK) are Cytoplasmic-facing. A helical transmembrane segment spans residues 258-278 (IVVQLFGVGALWIACVIGYLA). Over 279–317 (CFASLNIYIQSFARLVWSQAQHNPDHYLARLSSRHIPNN) the chain is Periplasmic. Residues 318 to 338 (ALNAVLGCCVVSTLVIHALEI) traverse the membrane as a helical segment. Topologically, residues 339–341 (NLD) are cytoplasmic. The chain crosses the membrane as a helical span at residues 342–362 (ALIIYANGIFIMIYLLCMLAG). Residues 363–378 (CKLLQGRYRLLAVVGG) lie on the Periplasmic side of the membrane. Residues 379-399 (LLCVLLLAMVGWKSLYALIML) form a helical membrane-spanning segment. The Cytoplasmic segment spans residues 400–418 (AGLWLLLPKRKTPENGITT).

It belongs to the amino acid-polyamine-organocation (APC) superfamily. Amino acid efflux (AAE) (TC 2.A.3.13) family.

It is found in the cell inner membrane. The catalysed reaction is L-methionine(in) + H(+)(out) = L-methionine(out) + H(+)(in). The enzyme catalyses L-leucine(in) + H(+)(out) = L-leucine(out) + H(+)(in). It carries out the reaction L-isoleucine(in) + H(+)(out) = L-isoleucine(out) + H(+)(in). It catalyses the reaction L-valine(in) + H(+)(out) = L-valine(out) + H(+)(in). With respect to regulation, efflux of L-methionine is inhibited by the proton ionophore carbonyl cyanide m-chlorophenylhydrazone (CCCP). Functionally, catalyzes the efflux of L-methionine, L-leucine, L-isoleucine and L-valine. Activity is dependent on electrochemical potential. The protein is L-methionine/branched-chain amino acid exporter YjeH (yjeH) of Escherichia coli (strain K12).